Here is a 121-residue protein sequence, read N- to C-terminus: Protein yippee-like 5 (121 aa).

The Yippee domain maps to Arg13 to Glu110. Residues Cys17, Cys20, Cys73, and Cys76 each contribute to the Zn(2+) site. Position 118 is a phosphoserine (Ser118).

The protein belongs to the yippee family. As to quaternary structure, identified in the CTLH complex that contains GID4, RANBP9 and/or RANBP10, MKLN1, MAEA, RMND5A (or alternatively its paralog RMND5B), GID8, ARMC8, WDR26 and YPEL5. Within this complex, MAEA, RMND5A (or alternatively its paralog RMND5B), GID8, WDR26, and RANBP9 and/or RANBP10 form the catalytic core, while GID4, MKLN1, ARMC8 and YPEL5 have ancillary roles. Interacts with RANBP9 and RANBP10.

Its subcellular location is the nucleus. It localises to the cytoplasm. The protein resides in the cytoskeleton. The protein localises to the microtubule organizing center. It is found in the centrosome. Its subcellular location is the spindle pole. It localises to the midbody. Functionally, component of the CTLH E3 ubiquitin-protein ligase complex that selectively accepts ubiquitin from UBE2H and mediates ubiquitination and subsequent proteasomal degradation of the transcription factor HBP1. Required for normal cell proliferation. The protein is Protein yippee-like 5 (YPEL5) of Macaca fascicularis (Crab-eating macaque).